Consider the following 397-residue polypeptide: Acetate kinase (397 aa).

N7 serves as a coordination point for Mg(2+). Residue K14 coordinates ATP. R90 contributes to the substrate binding site. Catalysis depends on D147, which acts as the Proton donor/acceptor. ATP-binding positions include 207 to 211 (HLGNG), 282 to 284 (DFR), and 330 to 334 (GLGEN). E383 contributes to the Mg(2+) binding site.

It belongs to the acetokinase family. In terms of assembly, homodimer. Mg(2+) serves as cofactor. The cofactor is Mn(2+).

The protein resides in the cytoplasm. It carries out the reaction acetate + ATP = acetyl phosphate + ADP. It functions in the pathway metabolic intermediate biosynthesis; acetyl-CoA biosynthesis; acetyl-CoA from acetate: step 1/2. Its function is as follows. Catalyzes the formation of acetyl phosphate from acetate and ATP. Can also catalyze the reverse reaction. The chain is Acetate kinase from Clostridium botulinum (strain ATCC 19397 / Type A).